Consider the following 267-residue polypeptide: tRNA pseudouridine synthase A (267 aa).

Asp-51 (nucleophile) is an active-site residue. Tyr-109 contributes to the substrate binding site.

This sequence belongs to the tRNA pseudouridine synthase TruA family. In terms of assembly, homodimer.

It catalyses the reaction uridine(38/39/40) in tRNA = pseudouridine(38/39/40) in tRNA. Its function is as follows. Formation of pseudouridine at positions 38, 39 and 40 in the anticodon stem and loop of transfer RNAs. This chain is tRNA pseudouridine synthase A, found in Staphylococcus aureus (strain bovine RF122 / ET3-1).